The following is a 250-amino-acid chain: Probable transcriptional regulatory protein ROP_68700 (250 aa).

Belongs to the TACO1 family.

Its subcellular location is the cytoplasm. In Rhodococcus opacus (strain B4), this protein is Probable transcriptional regulatory protein ROP_68700.